The chain runs to 317 residues: Inositol oxygenase 2 (317 aa).

Residues Arg57 and 115–117 (DES) contribute to the substrate site. 3 residues coordinate Fe cation: His128, His153, and Asp154. Residues Lys157 and 174 to 175 (GD) contribute to the substrate site. Residues His226, His252, and Asp285 each contribute to the Fe cation site. 252–253 (HS) is a substrate binding site.

This sequence belongs to the myo-inositol oxygenase family. Fe cation serves as cofactor. Expressed mainly in roots, stems, flowers and siliques. Low expression in leaves.

It is found in the cytoplasm. The catalysed reaction is myo-inositol + O2 = D-glucuronate + H2O + H(+). It participates in polyol metabolism; myo-inositol degradation into D-glucuronate; D-glucuronate from myo-inositol: step 1/1. In terms of biological role, involved in the biosynthesis of UDP-glucuronic acid (UDP-GlcA), providing nucleotide sugars for cell-wall polymers. May be also involved in plant ascorbate biosynthesis. This chain is Inositol oxygenase 2 (MIOX2), found in Arabidopsis thaliana (Mouse-ear cress).